A 522-amino-acid chain; its full sequence is TNF receptor-associated factor 6 (522 aa).

The tract at residues 1–354 (MSLLNCENSC…EAQQCNGIYI (354 aa)) is interaction with TAX1BP1. The RING-type zinc finger occupies 70-109 (CPICLMALREAVQTPCGHRFCKACIIKSIRDAGHKCPVDN). Lys124 is covalently cross-linked (Glycyl lysine isopeptide (Lys-Gly) (interchain with G-Cter in SUMO); alternate). Lys124 is covalently cross-linked (Glycyl lysine isopeptide (Lys-Gly) (interchain with G-Cter in ubiquitin); alternate). Lys142 is covalently cross-linked (Glycyl lysine isopeptide (Lys-Gly) (interchain with G-Cter in SUMO)). 2 consecutive TRAF-type zinc fingers follow at residues 150 to 202 (DHQA…EDKE) and 203 to 259 (IHDQ…NHLA). A coiled-coil region spans residues 288–348 (YISEVRNFQE…DKVAEIEAQQ (61 aa)). Lys319 participates in a covalent cross-link: Glycyl lysine isopeptide (Lys-Gly) (interchain with G-Cter in ubiquitin). Positions 350–499 (NGIYIWKIGN…DDTLLVRCEV (150 aa)) constitute an MATH domain. The interval 355 to 522 (WKIGNFGMHL…FQPRSTDAGV (168 aa)) is interaction with TANK. Lys453 is covalently cross-linked (Glycyl lysine isopeptide (Lys-Gly) (interchain with G-Cter in SUMO)).

The protein belongs to the TNF receptor-associated factor family. A subfamily. As to quaternary structure, homotrimer. Homooligomer. N-terminal region is dimeric while C-terminal region is trimeric; maybe providing a mode of oligomerization. Upon IL1B treatment, forms a complex with PELI1, IRAK1, IRAK4 and MYD88; this complex recruits MAP3K7/TAK1, TAB1 and TAB2 to mediate NF-kappa-B activation. Direct binding of SMAD6 to PELI1 prevents the complex formation and hence negatively regulates IL1R-TLR signaling and eventually NF-kappa-B-mediated gene expression. Binds to TNFRSF5/CD40 and TNFRSF11A/RANK. Associates with NGFR, TNFRSF17, IRAK2, IRAK3, RIPK2, MAP3K1, MAP3K5, MAP3K14, CSK, TRAF, TRAF-interacting protein TRIP and TNF receptor associated protein TDP2. Interacts with IL17R. Interacts with SQSTM1 bridging NTRK1 and NGFR. Forms a ternary complex with SQSTM1 and PRKCZ. Interacts with PELI2 and PELI3. Binds UBE2V1. Interacts with TAX1BP1; this interaction mediates deubiquitination of TRAF6 and inhibition of NF-kappa-B activation. Interacts with ZNF675. Interacts with ARRB1 and ARRB2. Interacts with MAP3K7 and TAB1/MAP3K7IP1; during IL-1 signaling. Interacts with UBE2N. Interacts with TGFBR1, HDAC1 and RANGAP1. Interacts with AKT1, AKT2 and AKT3. Interacts (via TRAF domains) with NUMBL (via C-terminal). Interacts with RBCK1. Interacts with LIMD1 (via LIM domains). Interacts with RSAD2/viperin. Interacts (via C-terminus) with EIF2AK2/PKR (via the kinase catalytic domain). Interacts with ZFAND5. Interacts with IL1RL1. Interacts with TRAFD1. Interacts with AJUBA. Interacts with MAVS/IPS1. Interacts (via TRAF domains) with DYNC2I2 (via WD domains). Interacts with IFIT3 (via N-terminus). Interacts with TICAM2. Interacts with CARD14. Interacts with CD40 and MAP3K8; the interaction is required for ERK activation. Interacts with TICAM1 and this interaction is enhanced in the presence of WDFY1. Interacts with TANK; this interaction increases in response to DNA damage. Interacts with USP10; this interaction increases in response to DNA damage. Interacts with ZC3H12A; this interaction increases in response to DNA damage and is stimulated by TANK. Interacts with WDFY3. Interacts with TRIM13. Interacts with GPS2. Interacts (via C-terminus) with SASH1. Interacts with LRRC19. Interacts with IL17RA and TRAF3IP2. Interacts with TOMM70. Interacts with AMBRA1; interaction is required to mediate 'Lys-63'-linked ubiquitination of ULK1. Interacts with CRBN; this interaction inhibits TLR4-mediated signaling by preventing TRAF6-mediated ubiquitination of ECSIT. In terms of processing, sumoylated on Lys-124, Lys-142 and Lys-453 with SUMO1. Polyubiquitinated on Lys-124 by TRAF3IP2; after cell stimulation with IL17A. Polyubiquitinated on Lys-124; after cell stimulation with IL1B or TGFB. This ligand-induced cell stimulation leads to dimerization/oligomerization of TRAF6 molecules, followed by auto-ubiquitination which involves UBE2N and UBE2V1 and leads to TRAF6 activation. This 'Lys-63' site-specific poly-ubiquitination appears to be associated with the activation of signaling molecules. Endogenous autoubiquitination occurs only for the cytoplasmic form. Deubiquitinated by USP10 in a TANK-dependent manner, leading to the negative regulation of NF-kappaB signaling upon DNA damage. LRRC19 induces 'Lys-63' ubiquitination. Ubiquitinated at Lys-319 by the SCF(FBXL2) complex, leading to its degradation by the proteasome. Post-translationally, (Microbial infection) Deubiquitinated by Epstein-Barr virus BPLF1 on both 'Lys-48' and 'Lys-63'-linked ubiquitin chains; leading to NF-kappa-B signaling inhibition. Expressed in heart, brain, placenta, lung, liver, skeletal muscle, kidney and pancreas.

The protein localises to the cytoplasm. The protein resides in the cell cortex. Its subcellular location is the nucleus. It localises to the lipid droplet. The catalysed reaction is S-ubiquitinyl-[E2 ubiquitin-conjugating enzyme]-L-cysteine + [acceptor protein]-L-lysine = [E2 ubiquitin-conjugating enzyme]-L-cysteine + N(6)-ubiquitinyl-[acceptor protein]-L-lysine.. It functions in the pathway protein modification; protein ubiquitination. E3 ubiquitin ligase that, together with UBE2N and UBE2V1, mediates the synthesis of 'Lys-63'-linked-polyubiquitin chains conjugated to proteins, such as ECSIT, IKBKG, IRAK1, AKT1 and AKT2. Also mediates ubiquitination of free/unanchored polyubiquitin chain that leads to MAP3K7 activation. Leads to the activation of NF-kappa-B and JUN. Seems to also play a role in dendritic cells (DCs) maturation and/or activation. Represses c-Myb-mediated transactivation, in B-lymphocytes. Adapter protein that seems to play a role in signal transduction initiated via TNF receptor, IL-1 receptor and IL-17 receptor. Regulates osteoclast differentiation by mediating the activation of adapter protein complex 1 (AP-1) and NF-kappa-B, in response to RANK-L stimulation. Together with MAP3K8, mediates CD40 signals that activate ERK in B-cells and macrophages, and thus may play a role in the regulation of immunoglobulin production. Acts as a regulator of the JNK and NF-kappa-B signaling pathways by initiating assembly of heterotypic 'Lys-63'-/'Lys-48'-linked branched ubiquitin chains that are then recognized by TAB2: TRAF6 catalyzes initial 'Lys-63'-linked-polyubiquitin chains that are then branched via 'Lys-48'-linked polyubiquitin by HUWE1. 'Lys-63'-/'Lys-48'-linked branched ubiquitin chains protect 'Lys-63'-linkages from CYLD deubiquitination. Participates also in the TCR signaling by ubiquitinating LAT. The chain is TNF receptor-associated factor 6 (TRAF6) from Homo sapiens (Human).